Reading from the N-terminus, the 374-residue chain is Glutamate 5-kinase (374 aa).

Position 16 (K16) interacts with ATP. Residues S56, D143, and N155 each coordinate substrate. ATP is bound at residue 175–176 (TD). In terms of domain architecture, PUA spans 282–360 (RGRVVLDAGA…SEIEAVLGYV (79 aa)).

Belongs to the glutamate 5-kinase family.

It localises to the cytoplasm. The catalysed reaction is L-glutamate + ATP = L-glutamyl 5-phosphate + ADP. The protein operates within amino-acid biosynthesis; L-proline biosynthesis; L-glutamate 5-semialdehyde from L-glutamate: step 1/2. Its function is as follows. Catalyzes the transfer of a phosphate group to glutamate to form L-glutamate 5-phosphate. The sequence is that of Glutamate 5-kinase from Ralstonia pickettii (strain 12J).